The chain runs to 162 residues: Ribosome maturation factor RimP (162 aa).

This sequence belongs to the RimP family.

It localises to the cytoplasm. Required for maturation of 30S ribosomal subunits. The protein is Ribosome maturation factor RimP of Cupriavidus metallidurans (strain ATCC 43123 / DSM 2839 / NBRC 102507 / CH34) (Ralstonia metallidurans).